Reading from the N-terminus, the 425-residue chain is Elongation factor 1-alpha (425 aa).

A tr-type G domain is found at 5–221; sequence KPHINLAVIG…DELEVPDKPT (217 aa). The interval 14–21 is G1; sequence GHIDHGKS. 14 to 21 lines the GTP pocket; it reads GHIDHGKS. Residue Ser21 coordinates Mg(2+). Residues 70–74 form a G2 region; that stretch reads GITID. Residues 91-94 are G3; sequence DCPG. Residues 91-95 and 146-149 each bind GTP; these read DCPGH and NKMD. Positions 146–149 are G4; it reads NKMD. The interval 185–187 is G5; that stretch reads SAF.

Belongs to the TRAFAC class translation factor GTPase superfamily. Classic translation factor GTPase family. EF-Tu/EF-1A subfamily.

It localises to the cytoplasm. The catalysed reaction is GTP + H2O = GDP + phosphate + H(+). In terms of biological role, GTP hydrolase that promotes the GTP-dependent binding of aminoacyl-tRNA to the A-site of ribosomes during protein biosynthesis. In Methanospirillum hungatei JF-1 (strain ATCC 27890 / DSM 864 / NBRC 100397 / JF-1), this protein is Elongation factor 1-alpha.